We begin with the raw amino-acid sequence, 339 residues long: DNA-directed RNA polymerase subunit alpha (339 aa).

The tract at residues 1–235 (MTIQKNWQEL…DQLNVFVNFE (235 aa)) is alpha N-terminal domain (alpha-NTD). The segment at 251–339 (FNPAFLKKVD…ELAKRFEDHY (89 aa)) is alpha C-terminal domain (alpha-CTD).

This sequence belongs to the RNA polymerase alpha chain family. Homodimer. The RNAP catalytic core consists of 2 alpha, 1 beta, 1 beta' and 1 omega subunit. When a sigma factor is associated with the core the holoenzyme is formed, which can initiate transcription.

The catalysed reaction is RNA(n) + a ribonucleoside 5'-triphosphate = RNA(n+1) + diphosphate. Its function is as follows. DNA-dependent RNA polymerase catalyzes the transcription of DNA into RNA using the four ribonucleoside triphosphates as substrates. In Rhodopseudomonas palustris (strain BisA53), this protein is DNA-directed RNA polymerase subunit alpha.